Reading from the N-terminus, the 879-residue chain is MEKMGLNEIRSKFLEFFESKGHYVANSYSLVPNNDKSLLLINSGMAPLKNYFSGVEVPPSVRMCTSQKCIRTGDIENVGITARHATFFEMMGNFSFGDYFKRESIKWGWEFVTEWLNIPEDKIWVTVYEEDDDSYDIWAKEMNFPEERMVRLGKDDNFWEIGTGPCGPCSEIYFDRGEEYGCDNPDCKPGCDCDRYLEFWNHVFTQFDRDEEGNYSLLENKNIDTGMGLERMGCIMQGVDTIFEVDTIKSILEAVEKLTGVKYGENPKNDISIRIITDHIRAVTFLVSDGVLPSNEGRGYVLRRLLRRAARHGKLLGVKELFLQKLIDEVIKVNDKAYPVLVEKESYIKKVVGIEEEKFNETIDQGTEILNSYIEVLKNEGKTVLSGQEAFKLYDTYGFPIDLTKEILEEEHLSVDEEAFNEEMEKQKERARNARGNMDGESWKEDPLSKLESTVDSTFNGYSEIYGEGTIEAIVKDDELVQSAEEGDKVSIVLDNTTFYPEGGGQVGDCGLITNENLVLEVLNTKKGANNSIKHIGIIKSGRISNGDKVKTLVDRETRMSAARNHSATHLLHKALREVLGEHVNQAGSLVTPERLRFDITHFEAISNEELKVIEEKVNNVILSSLDIKCDIMNIKEAKEKGATALFGEKYGDEVRVVSMGDYSTELCGGTHLTNTSQVGMFKILSEGGVAAGVRRIEAITGKAVYEYLKERDGIISEVCVNLKSKEDNLIQRISSLLEENKNLSKELHDMKAKMSLQSVDSIFDSKVEVNGVNLITNKFEGMDMDTLRETADNLRDKLGSGVVVLANVVDDKVNFVVTATKDVLDKGIHSGNIVREVAKIAGGKGGGRPNMAQAGASDVSKVDQALSYASEVIKTQVK.

A disordered region spans residues 426–449; that stretch reads KQKERARNARGNMDGESWKEDPLS. The Zn(2+) site is built by H566, H570, C668, and H672.

Belongs to the class-II aminoacyl-tRNA synthetase family. Zn(2+) is required as a cofactor.

Its subcellular location is the cytoplasm. The catalysed reaction is tRNA(Ala) + L-alanine + ATP = L-alanyl-tRNA(Ala) + AMP + diphosphate. Catalyzes the attachment of alanine to tRNA(Ala) in a two-step reaction: alanine is first activated by ATP to form Ala-AMP and then transferred to the acceptor end of tRNA(Ala). Also edits incorrectly charged Ser-tRNA(Ala) and Gly-tRNA(Ala) via its editing domain. This is Alanine--tRNA ligase from Clostridioides difficile (strain 630) (Peptoclostridium difficile).